Consider the following 338-residue polypeptide: Lipoate-protein ligase A (338 aa).

The 188-residue stretch at 29-216 (DPNQRVLFLW…AFFAHYGARV (188 aa)) folds into the BPL/LPL catalytic domain. ATP contacts are provided by residues Arg71, 76-79 (GAVF), and Lys134. Lys134 contributes to the (R)-lipoate binding site.

It belongs to the LplA family. Monomer.

It localises to the cytoplasm. It carries out the reaction L-lysyl-[lipoyl-carrier protein] + (R)-lipoate + ATP = N(6)-[(R)-lipoyl]-L-lysyl-[lipoyl-carrier protein] + AMP + diphosphate + H(+). It participates in protein modification; protein lipoylation via exogenous pathway; protein N(6)-(lipoyl)lysine from lipoate: step 1/2. Its pathway is protein modification; protein lipoylation via exogenous pathway; protein N(6)-(lipoyl)lysine from lipoate: step 2/2. Catalyzes both the ATP-dependent activation of exogenously supplied lipoate to lipoyl-AMP and the transfer of the activated lipoyl onto the lipoyl domains of lipoate-dependent enzymes. This is Lipoate-protein ligase A from Aeromonas salmonicida (strain A449).